The sequence spans 625 residues: Glucokinase regulatory protein (625 aa).

2 consecutive SIS domains span residues 90–286 and 320–499; these read VQEV…QGIA and VSTS…LLGK. Beta-D-fructose 1-phosphate-binding positions include 109–110, Glu153, and 179–181; these read TS and SVG. 109-110 contributes to the beta-D-fructose 6-phosphate binding site; sequence TS. Beta-D-fructose 6-phosphate is bound at residue 179–181; sequence SVG. Positions 199-200 are important for interaction with GCK; sequence AV. Residue Glu348 coordinates beta-D-fructose 1-phosphate. The tract at residues 463–465 is essential for interaction with GCK; it reads LLF. Lys514 serves as a coordination point for beta-D-fructose 1-phosphate. Lys514 is a beta-D-fructose 6-phosphate binding site.

It belongs to the GCKR family. In terms of assembly, interacts (fructose 6-phosphate bound form) with GCK. As to expression, found in liver and pancreas. Not detected in muscle, brain, heart, thymus, intestine, uterus, adipose tissue, kidney, adrenal, lung or spleen.

It is found in the cytoplasm. The protein localises to the nucleus. It localises to the mitochondrion. Functionally, regulates glucokinase (GCK) by forming an inactive complex with this enzyme. Acts by promoting GCK recruitment to the nucleus, possibly to provide a reserve of GCK that can be quickly released in the cytoplasm after a meal. The affinity of GCKR for GCK is modulated by fructose metabolites: GCKR with bound fructose 6-phosphate has increased affinity for GCK, while GCKR with bound fructose 1-phosphate has strongly decreased affinity for GCK and does not inhibit GCK activity. This is Glucokinase regulatory protein from Homo sapiens (Human).